Reading from the N-terminus, the 341-residue chain is N-acetyl-gamma-glutamyl-phosphate reductase (341 aa).

The active site involves Cys149.

It belongs to the NAGSA dehydrogenase family. Type 1 subfamily.

Its subcellular location is the cytoplasm. It carries out the reaction N-acetyl-L-glutamate 5-semialdehyde + phosphate + NADP(+) = N-acetyl-L-glutamyl 5-phosphate + NADPH + H(+). It participates in amino-acid biosynthesis; L-arginine biosynthesis; N(2)-acetyl-L-ornithine from L-glutamate: step 3/4. Catalyzes the NADPH-dependent reduction of N-acetyl-5-glutamyl phosphate to yield N-acetyl-L-glutamate 5-semialdehyde. In Methanocaldococcus jannaschii (strain ATCC 43067 / DSM 2661 / JAL-1 / JCM 10045 / NBRC 100440) (Methanococcus jannaschii), this protein is N-acetyl-gamma-glutamyl-phosphate reductase.